Here is a 155-residue protein sequence, read N- to C-terminus: uncharacterized protein (155 aa).

A mitochondrion-targeting transit peptide spans 1–17 (MMRGASKRSISSAAVLL). Positions 111–155 (WHRQQKRSQRRRSVAKYEQREEAARVEKEEREARDREMVRELFRR) are disordered. Residues 113–124 (RQQKRSQRRRSV) are compositionally biased toward basic residues. Over residues 125-155 (AKYEQREEAARVEKEEREARDREMVRELFRR) the composition is skewed to basic and acidic residues.

The protein belongs to the prokaryotic/mitochondrial release factor family.

It localises to the mitochondrion. This is an uncharacterized protein from Saccharomyces cerevisiae (strain ATCC 204508 / S288c) (Baker's yeast).